We begin with the raw amino-acid sequence, 2439 residues long: Protein roller-3 (2439 aa).

The N-terminal stretch at 1–26 (MLDFPRFSLFLFLLFSSFLFSSFVHA) is a signal peptide. Residues 27 to 1851 (ATVFSSSLKT…EEEKGGILPY (1825 aa)) are Extracellular-facing. N-linked (GlcNAc...) asparagine glycans are attached at residues Asn-64, Asn-182, Asn-334, Asn-394, Asn-496, Asn-533, Asn-657, Asn-766, Asn-868, Asn-1003, Asn-1036, Asn-1090, and Asn-1261. One can recognise a Fibronectin type-III 1 domain in the interval 618–720 (KPRIVAVSSI…STSNTALPDL (103 aa)). 4 Fibronectin type-III domains span residues 1403–1503 (SKGI…TGFG), 1507–1628 (APRD…TLDV), 1629–1732 (PGTL…IQQA), and 1738–1843 (VPTA…EKEE). N-linked (GlcNAc...) asparagine glycans are attached at residues Asn-1567, Asn-1636, Asn-1677, and Asn-1779. The helical transmembrane segment at 1852-1872 (FLGISIILLLAAMILVGCFWL) threads the bilayer. Residues 1873-2439 (KSRRRQQMKK…GGTCRSVSQV (567 aa)) are Cytoplasmic-facing. A Protein kinase domain is found at 1928-2199 (VEIVRHISDC…ATILKIFETC (272 aa)). ATP-binding positions include 1934 to 1942 (ISDCSYGSV) and Lys-1963. Disordered regions lie at residues 2214 to 2277 (NEGS…RPAT), 2315 to 2348 (SQRP…NRTN), and 2412 to 2439 (HLRA…VSQV). 3 stretches are compositionally biased toward polar residues: residues 2216-2233 (GSDN…SSRE), 2334-2347 (ATSS…SNRT), and 2420-2439 (PPTR…VSQV).

It localises to the membrane. In terms of biological role, involved in larval development and locomotion. This chain is Protein roller-3, found in Caenorhabditis briggsae.